A 697-amino-acid polypeptide reads, in one-letter code: Phenylalanine--tRNA ligase beta subunit, chloroplastic (697 aa).

Residues 283 to 368 (NISRILFIDK…RIYGFDNFIS (86 aa)) form the B5 domain. Mg(2+)-binding residues include aspartate 346, aspartate 352, glutamate 355, and glutamate 356. The region spanning 609-697 (SSYPSLTRDI…IDDLLNEYKL (89 aa)) is the FDX-ACB domain.

Belongs to the phenylalanyl-tRNA synthetase beta subunit family. Type 1 subfamily. As to quaternary structure, tetramer of two alpha and two beta subunits. Mg(2+) serves as cofactor.

The protein localises to the plastid. It is found in the chloroplast. The catalysed reaction is tRNA(Phe) + L-phenylalanine + ATP = L-phenylalanyl-tRNA(Phe) + AMP + diphosphate + H(+). This chain is Phenylalanine--tRNA ligase beta subunit, chloroplastic, found in Gracilaria tenuistipitata var. liui (Red alga).